Consider the following 209-residue polypeptide: MIGLVGRKVGMTRIFNEDGVSIPVTVIEIEANRVTQVKTVETDGYSAIQVTTGSKKASRVTKPEAGHFVKAGVEAGRGLWEFRTTEGEEFTLGQEINVDIFADVKKVDVTGTSKGKGFAGGVKRWNFRTQDATHGNSLSHRVLGSIGQNQTPGRVFKGKKMAGHLGNERVTVQSLEVVRVDAERKLLLVKGAVPGATNGDVIVKPAVKA.

Q150 is modified (N5-methylglutamine).

This sequence belongs to the universal ribosomal protein uL3 family. In terms of assembly, part of the 50S ribosomal subunit. Forms a cluster with proteins L14 and L19. In terms of processing, methylated by PrmB.

One of the primary rRNA binding proteins, it binds directly near the 3'-end of the 23S rRNA, where it nucleates assembly of the 50S subunit. The protein is Large ribosomal subunit protein uL3 of Pasteurella multocida (strain Pm70).